The following is a 297-amino-acid chain: 4-diphosphocytidyl-2-C-methyl-D-erythritol kinase (297 aa).

Lys-22 is an active-site residue. Residue 111–121 (PSQAGMGGGSS) participates in ATP binding. Asp-153 is a catalytic residue.

It belongs to the GHMP kinase family. IspE subfamily.

The catalysed reaction is 4-CDP-2-C-methyl-D-erythritol + ATP = 4-CDP-2-C-methyl-D-erythritol 2-phosphate + ADP + H(+). The protein operates within isoprenoid biosynthesis; isopentenyl diphosphate biosynthesis via DXP pathway; isopentenyl diphosphate from 1-deoxy-D-xylulose 5-phosphate: step 3/6. Catalyzes the phosphorylation of the position 2 hydroxy group of 4-diphosphocytidyl-2C-methyl-D-erythritol. The sequence is that of 4-diphosphocytidyl-2-C-methyl-D-erythritol kinase from Polaromonas naphthalenivorans (strain CJ2).